The chain runs to 314 residues: MAFLEDGNHTVVTEFILLGLTDDPVLRVILFIIILCIYLVTVSGNLSTILLIRVSSQLHHPMYFFLSHLASIDIAISSSVTPNMVVNFLVERSSISYIGCGIQLGSAVFFGAIECFLLAVMAYDRFVAICNPLLYSTKMSKQVCIQLLVGSYIGGFIHASFFTLSFVSFLFCGPNRINHFFCDFTPLVELSCSDNSVLIILDSFSTGTIIVITVFVIAISYTCILITILKMHSTEGRHKAFSTCTSHLTVVTLLYGTVTFIYVMPKSSYSTDQNKVISVFYMVVIPMLNPIIYSLRNNEIKGALKKQLGEKNIF.

Over 1–28 (MAFLEDGNHTVVTEFILLGLTDDPVLRV) the chain is Extracellular. N8 carries N-linked (GlcNAc...) asparagine glycosylation. A helical membrane pass occupies residues 29–49 (ILFIIILCIYLVTVSGNLSTI). At 50–57 (LLIRVSSQ) the chain is on the cytoplasmic side. A helical transmembrane segment spans residues 58–78 (LHHPMYFFLSHLASIDIAISS). At 79 to 102 (SVTPNMVVNFLVERSSISYIGCGI) the chain is on the extracellular side. Residues C100 and C192 are joined by a disulfide bond. A helical membrane pass occupies residues 103 to 123 (QLGSAVFFGAIECFLLAVMAY). Residues 124–136 (DRFVAICNPLLYS) are Cytoplasmic-facing. Residues 137–157 (TKMSKQVCIQLLVGSYIGGFI) form a helical membrane-spanning segment. The Extracellular segment spans residues 158–199 (HASFFTLSFVSFLFCGPNRINHFFCDFTPLVELSCSDNSVLI). The helical transmembrane segment at 200–220 (ILDSFSTGTIIVITVFVIAIS) threads the bilayer. The Cytoplasmic segment spans residues 221-240 (YTCILITILKMHSTEGRHKA). Residues 241–261 (FSTCTSHLTVVTLLYGTVTFI) form a helical membrane-spanning segment. The Extracellular portion of the chain corresponds to 262-274 (YVMPKSSYSTDQN). The chain crosses the membrane as a helical span at residues 275-295 (KVISVFYMVVIPMLNPIIYSL). Residues 296–314 (RNNEIKGALKKQLGEKNIF) lie on the Cytoplasmic side of the membrane.

The protein belongs to the G-protein coupled receptor 1 family.

It is found in the cell membrane. Functionally, potential odorant receptor. This Mus musculus (Mouse) protein is Olfactory receptor 5P81.